Reading from the N-terminus, the 247-residue chain is Probable transcriptional regulatory protein PBPRA1113 (247 aa).

It belongs to the TACO1 family.

It is found in the cytoplasm. In Photobacterium profundum (strain SS9), this protein is Probable transcriptional regulatory protein PBPRA1113.